The chain runs to 178 residues: Transcription termination/antitermination protein NusG (178 aa).

Residues 130 to 159 (SVKVKEGPFANFIGTIEEIQLDKRKLKVHV) enclose the KOW domain.

The protein belongs to the NusG family.

In terms of biological role, participates in transcription elongation, termination and antitermination. This is Transcription termination/antitermination protein NusG from Halalkalibacterium halodurans (strain ATCC BAA-125 / DSM 18197 / FERM 7344 / JCM 9153 / C-125) (Bacillus halodurans).